The sequence spans 23 residues: Dahlein-4.2 (23 aa).

As to expression, expressed by the skin dorsal glands.

It is found in the secreted. Has no antimicrobial activity. This chain is Dahlein-4.2, found in Ranoidea dahlii (Dahl's aquatic frog).